The primary structure comprises 110 residues: Iron-sulfur cluster assembly protein CyaY (110 aa).

The protein belongs to the frataxin family.

Involved in iron-sulfur (Fe-S) cluster assembly. May act as a regulator of Fe-S biogenesis. This is Iron-sulfur cluster assembly protein CyaY from Pseudomonas syringae pv. tomato (strain ATCC BAA-871 / DC3000).